The sequence spans 472 residues: Membrane-bound acylglycerophosphatidylinositol O-acyltransferase MBOAT7 (472 aa).

Residues methionine 1–glutamate 5 lie on the Cytoplasmic side of the membrane. A helical transmembrane segment spans residues tryptophan 6–phenylalanine 22. Over lysine 23–glycine 33 the chain is Lumenal. A helical membrane pass occupies residues alanine 34–isoleucine 57. Over leucine 58–alanine 73 the chain is Cytoplasmic. The helical transmembrane segment at leucine 74–glycine 93 threads the bilayer. Residues leucine 94–arginine 194 lie on the Lumenal side of the membrane. A helical membrane pass occupies residues alanine 195 to phenylalanine 212. Residues proline 213–leucine 231 lie on the Cytoplasmic side of the membrane. A helical membrane pass occupies residues phenylalanine 232–phenylalanine 261. Over glycine 262–tryptophan 426 the chain is Lumenal. An N-linked (GlcNAc...) asparagine glycan is attached at asparagine 321. A helical membrane pass occupies residues alanine 427–leucine 447. Residues glycine 448–glutamate 472 lie on the Cytoplasmic side of the membrane. Positions serine 453–glutamate 472 are disordered.

Belongs to the membrane-bound acyltransferase family. Interacts with SPTSSA; the interaction facilitates MBOAT7 location to mitochondria-associated membranes (MAMs). Overexpressed in metastatic breast and bladder carcinomas relative to normal breast epithelium and urothelium.

The protein resides in the endoplasmic reticulum membrane. It catalyses the reaction a 1-acyl-sn-glycero-3-phospho-(1D-myo-inositol) + (5Z,8Z,11Z,14Z)-eicosatetraenoyl-CoA = a 1-acyl-2-(5Z,8Z,11Z,14Z-eicosatetraenoyl)-sn-glycero-3-phospho-(1D-myo-inositol) + CoA. The catalysed reaction is (5Z,8Z,11Z,14Z)-eicosatetraenoyl-CoA + 1-hexadecanoyl-sn-glycero-3-phosphocholine = 1-hexadecanoyl-2-(5Z,8Z,11Z,14Z-eicosatetraenoyl)-sn-glycero-3-phosphocholine + CoA. It carries out the reaction a 1-acyl-sn-glycero-3-phospho-(1D-myo-inositol) + an acyl-CoA = a 1,2-diacyl-sn-glycero-3-phospho-(1D-myo-inositol) + CoA. The enzyme catalyses 1-octadecanoyl-sn-glycero-3-phospho-(1D-myo-inositol) + (5Z,8Z,11Z,14Z)-eicosatetraenoyl-CoA = 1-octadecanoyl-2-(5Z,8Z,11Z,14Z-eicosatetraenoyl)-sn-glycero-3-phospho-(1D-myo-inositol) + CoA. It functions in the pathway lipid metabolism; phospholipid metabolism. Activity is inhibited by thimerosal. Acyltransferase which catalyzes the transfer of an acyl group from an acyl-CoA to a lysophosphatidylinositol (1-acylglycerophosphatidylinositol or LPI) leading to the production of a phosphatidylinositol (1,2-diacyl-sn-glycero-3-phosphoinositol or PI) and participates in the reacylation step of the phospholipid remodeling pathway also known as the Lands cycle. Prefers arachidonoyl-CoA as the acyl donor, thus contributing to the regulation of free levels arachidonic acid in cell. In liver, participates in the regulation of triglyceride metabolism through the phosphatidylinositol acyl-chain remodeling regulation. The sequence is that of Membrane-bound acylglycerophosphatidylinositol O-acyltransferase MBOAT7 from Homo sapiens (Human).